A 790-amino-acid polypeptide reads, in one-letter code: LPS-assembly protein LptD (790 aa).

The signal sequence occupies residues 1 to 20 (MRMLRWLILSAFSVAGAVQA).

It belongs to the LptD family. In terms of assembly, component of the lipopolysaccharide transport and assembly complex. Interacts with LptE and LptA.

It localises to the cell outer membrane. In terms of biological role, together with LptE, is involved in the assembly of lipopolysaccharide (LPS) at the surface of the outer membrane. In Bordetella pertussis (strain Tohama I / ATCC BAA-589 / NCTC 13251), this protein is LPS-assembly protein LptD.